The chain runs to 510 residues: NAD(P)H-quinone oxidoreductase subunit 2, chloroplastic (510 aa).

Transmembrane regions (helical) follow at residues 24–44 (LLLF…GLIL), 59–79 (WFYF…LFRW), 99–119 (IFQF…VEYI), 124–144 (MAIT…MFLC), 149–169 (XITI…LSGY), 183–203 (YLLM…WLYG), 229–249 (ISIA…PAPF), 295–315 (WHLL…LIAI), 323–343 (MLAY…IVGD), 347–367 (GYAS…GTFA), 395–415 (ALSS…AGFF), 418–438 (LHLF…IGLL), and 484–504 (MTVC…ILAI).

The protein belongs to the complex I subunit 2 family. As to quaternary structure, NDH is composed of at least 16 different subunits, 5 of which are encoded in the nucleus.

It is found in the plastid. Its subcellular location is the chloroplast thylakoid membrane. The catalysed reaction is a plastoquinone + NADH + (n+1) H(+)(in) = a plastoquinol + NAD(+) + n H(+)(out). It catalyses the reaction a plastoquinone + NADPH + (n+1) H(+)(in) = a plastoquinol + NADP(+) + n H(+)(out). Functionally, NDH shuttles electrons from NAD(P)H:plastoquinone, via FMN and iron-sulfur (Fe-S) centers, to quinones in the photosynthetic chain and possibly in a chloroplast respiratory chain. The immediate electron acceptor for the enzyme in this species is believed to be plastoquinone. Couples the redox reaction to proton translocation, and thus conserves the redox energy in a proton gradient. This chain is NAD(P)H-quinone oxidoreductase subunit 2, chloroplastic, found in Narcissus elegans (Daffodil).